Consider the following 143-residue polypeptide: Root meristem growth factor 10 (143 aa).

Residues 1-27 form the signal peptide; it reads MDMLRSACFYFLLIVFVILSWSLLCDS. Positions 28-130 are excised as a propeptide; sequence RHLGHMEKKL…SDQEHPGFNL (103 aa). N-linked (GlcNAc...) asparagine glycosylation is present at Asn60. Over residues 74–83 the composition is skewed to polar residues; it reads NHGDNGQING. Residues 74 to 143 are disordered; it reads NHGDNGQING…QPTTHPPHHN (70 aa). A Nuclear localization signal motif is present at residues 92–99; sequence VKRASDKK. Position 132 is a sulfotyrosine (Tyr132). The residue at position 140 (Pro140) is a Hydroxyproline.

It belongs to the RGF family. As to quaternary structure, binds to LRR receptor-like serine/threonine-protein kinases RGI1, RGI2 and RGI3 to trigger their dimerization with SERK proteins and subsequent signaling. The tyrosine sulfation is critical for the function of the peptide. Expressed in root tips.

The protein localises to the secreted. The protein resides in the nucleus. Its function is as follows. Maintains the postembryonic root stem cell niche by regulating the expression levels and patterns of the transcription factor PLETHORA (PLT), mainly at the post-transcriptional level. Promotes root elongation. This is Root meristem growth factor 10 from Arabidopsis thaliana (Mouse-ear cress).